A 427-amino-acid polypeptide reads, in one-letter code: Trigger factor (427 aa).

Residues 163 to 248 (GDTVVIDFVG…IHEVKAKEVP (86 aa)) form the PPIase FKBP-type domain.

The protein belongs to the FKBP-type PPIase family. Tig subfamily.

It is found in the cytoplasm. It catalyses the reaction [protein]-peptidylproline (omega=180) = [protein]-peptidylproline (omega=0). In terms of biological role, involved in protein export. Acts as a chaperone by maintaining the newly synthesized protein in an open conformation. Functions as a peptidyl-prolyl cis-trans isomerase. This is Trigger factor from Streptococcus suis (strain 05ZYH33).